Reading from the N-terminus, the 82-residue chain is MSYRRGSGPSEEEMIMQQMMIKLSMGISGQCFKECVTSFSSGQMVPQEATCIQSCAKRQQSAFMAMNDIQGQLQAKQGAGMF.

The sequence is that of Protein C2 (C2) from Sterkiella nova (Ciliate).